Consider the following 502-residue polypeptide: Maturase K (502 aa).

It belongs to the intron maturase 2 family. MatK subfamily.

It is found in the plastid. The protein localises to the chloroplast. Its function is as follows. Usually encoded in the trnK tRNA gene intron. Probably assists in splicing its own and other chloroplast group II introns. The sequence is that of Maturase K from Brassica oleracea (Wild cabbage).